A 273-amino-acid chain; its full sequence is Epithelial sodium channel subunit beta (273 aa).

Residues 1–245 (NCYIFNWGQE…RSISESPTTN (245 aa)) are Extracellular-facing. Intrachain disulfides connect cysteine 92-cysteine 179, cysteine 117-cysteine 175, cysteine 121-cysteine 171, cysteine 130-cysteine 157, and cysteine 132-cysteine 146. Residues 246-273 (VVWLLSNLGGQFGFWMGGSVLCIIEFGE) form a helical membrane-spanning segment.

It belongs to the amiloride-sensitive sodium channel (TC 1.A.6) family. SCNN1B subfamily. As to quaternary structure, component of the heterotrimeric epithelial sodium channel (ENaC) composed of an alpha/SCNN1A, a beta/SCNN1B and a gamma/SCNN1G subunit.

The protein resides in the apical cell membrane. The protein localises to the cytoplasmic vesicle membrane. The enzyme catalyses Na(+)(in) = Na(+)(out). With respect to regulation, originally identified and characterized by its inhibition by the diuretic drug amiloride. Its function is as follows. This is one of the three pore-forming subunits of the heterotrimeric epithelial sodium channel (ENaC), a critical regulator of sodium balance and fluid homeostasis. ENaC operates in epithelial tissues, where it mediates the electrodiffusion of sodium ions from extracellular fluid through the apical membrane of cells, with water following osmotically. It plays a key role in maintaining sodium homeostasis through electrogenic sodium reabsorption in the kidneys. Additionally, ENaC is essential for airway surface liquid homeostasis, which is crucial for proper mucus clearance. The polypeptide is Epithelial sodium channel subunit beta (Aquarana catesbeiana (American bullfrog)).